The primary structure comprises 152 residues: ALK and LTK ligand 2 (152 aa).

A signal peptide spans 1–24; sequence MRGPGHPLLLGLLLVLGAAGRGRG. Disulfide bonds link C111/C147 and C125/C134.

The protein belongs to the ALKAL family. As to quaternary structure, homodimer; interchain disulfide bond is not required for homodimerization. In terms of tissue distribution, widely expressed with highest levels in adrenal gland and modest levels in pancreas, testis and uterus.

It is found in the secreted. The protein resides in the cell membrane. In terms of biological role, cytokine that acts as a physiological ligand for receptor tyrosine kinases LTK and ALK, leading to their activation. Cytokine-binding is sufficient to activate LTK. In contrast, ALKAL2-driven activation of ALK is coupled with heparin-binding to ALK. Stimulation of ALK signaling is involved in neural development and regulation of energy expenditure. This Homo sapiens (Human) protein is ALK and LTK ligand 2.